The sequence spans 412 residues: Cytochrome P450-SOY (412 aa).

Positions 1–25 (MTESTTDPARQNLDPTSPAPATSFP) are enriched in polar residues. The segment at 1-38 (MTESTTDPARQNLDPTSPAPATSFPQDRGCPYHPPAGY) is disordered. Cys-361 serves as a coordination point for heme.

Belongs to the cytochrome P450 family. The cofactor is heme.

The protein resides in the cytoplasm. The polypeptide is Cytochrome P450-SOY (cyp105D1) (Streptomyces griseus).